The sequence spans 143 residues: Large-conductance mechanosensitive channel (143 aa).

The next 2 helical transmembrane spans lie at 16-36 and 84-104; these read VIDLAVGVVIGAAFGKIVTAL and INTVVQFVIIAFAIFLVVKLI.

The protein belongs to the MscL family. In terms of assembly, homopentamer.

It localises to the cell inner membrane. Channel that opens in response to stretch forces in the membrane lipid bilayer. May participate in the regulation of osmotic pressure changes within the cell. This is Large-conductance mechanosensitive channel from Xanthomonas campestris pv. campestris (strain 8004).